Reading from the N-terminus, the 96-residue chain is MKATMLLAVVVAVFVAGTEAHPHVCTSYYCSKFCGTAGCTRYGCRNLHRGKLCFCLHCSRVKFPFGATQDAKSMNELEYTPIMKSMENLDNGMDML.

Positions M1 to A20 are cleaved as a signal peptide. The propeptide at V61–L96 is removed in mature form.

Contains four disulfide bonds. Hemocytes.

Its subcellular location is the secreted. Its function is as follows. Bacteriolytic activity against Gram-positive bacteria M.luteus, B.megaterium and A.viridans and Gram-negative bacteria E.coli D31. Possesses antifungal activity against F.oxysporum. The sequence is that of Myticin-B from Mytilus galloprovincialis (Mediterranean mussel).